The primary structure comprises 272 residues: Energy-coupling factor transporter ATP-binding protein EcfA1 (272 aa).

Positions 5–239 constitute an ABC transporter domain; the sequence is IKIDNLKYSY…RKALHENGLE (235 aa). 37–44 contributes to the ATP binding site; that stretch reads GHNGSGKS. Glu163 (proton acceptor) is an active-site residue.

This sequence belongs to the ABC transporter superfamily. Energy-coupling factor EcfA family. In terms of assembly, forms a stable energy-coupling factor (ECF) transporter complex probably composed of 2 membrane-embedded substrate-binding proteins (S component), 2 ATP-binding proteins (A component) and 2 transmembrane proteins (T component). This complex interacts with a number of substrate-specific components, including FolT, PanT and RibU for 5-formyltetrahydrofolate, pantothenate and riboflavin respectively.

Its subcellular location is the cell membrane. Its function is as follows. ATP-binding (A) component of a common energy-coupling factor (ECF) ABC-transporter complex. Unlike classic ABC transporters this ECF transporter provides the energy necessary to transport a number of different substrates including 5-formyltetrahydrofolate, pantothenate and riboflavin. Expression of the complex plus FolT in E.coli allows 5-formyltetrahydrofolate uptake; 5-formyltetrahydrofolate is not taken up in the absence of FolT or the EcfA1A2T complex. The protein is Energy-coupling factor transporter ATP-binding protein EcfA1 of Leuconostoc mesenteroides subsp. mesenteroides (strain ATCC 8293 / DSM 20343 / BCRC 11652 / CCM 1803 / JCM 6124 / NCDO 523 / NBRC 100496 / NCIMB 8023 / NCTC 12954 / NRRL B-1118 / 37Y).